Consider the following 234-residue polypeptide: uncharacterized protein (234 aa).

4 helical membrane-spanning segments follow: residues 28–48 (IVIIALIYCILHDTMSLSIIS), 67–87 (FQIFIFLISILILQLTSFDPI), 123–143 (GGVDLFILLDACLLWANSGTI), and 154–174 (LYCIFHCSFILLGLGVGGLLY).

The protein belongs to the complex I subunit 2 family.

It is found in the mitochondrion membrane. This is an uncharacterized protein from Neurospora crassa (strain ATCC 24698 / 74-OR23-1A / CBS 708.71 / DSM 1257 / FGSC 987).